Consider the following 91-residue polypeptide: Small ribosomal subunit protein bS16 (91 aa).

The protein belongs to the bacterial ribosomal protein bS16 family.

This chain is Small ribosomal subunit protein bS16, found in Streptococcus mutans serotype c (strain ATCC 700610 / UA159).